A 401-amino-acid chain; its full sequence is Transcriptional regulator Myc-2 (401 aa).

A glycan (O-linked (GlcNAc) threonine) is linked at T58. Positions 76–84 (EMVSEFLGD) match the 9aaTAD motif. Disordered regions lie at residues 177-251 (SSKS…SRYP) and 286-325 (LESS…HNVL). Acidic residues predominate over residues 205–230 (DSEDEEEEEEEEEEEEEEEEEEEEID). A compositionally biased stretch (basic and acidic residues) spans 233–247 (TVEKRQKRNEAEVSD). The span at 288-297 (SSSSNNSSSN) shows a compositional bias: low complexity. Residues 317–369 (DKRRTHNVLERQRRNELKLSFFALRDEIPEVANNEKAAKVVILKKATECIHSM) form the bHLH domain. A leucine-zipper region spans residues 376 to 397 (LLSIKEQLRRKSEQLKHRLQQL).

In terms of assembly, efficient DNA binding requires dimerization with another bHLH protein. Binds DNA as a heterodimer with MAX.

It is found in the nucleus. In terms of biological role, transcription factor that binds DNA in a non-specific manner, yet also specifically recognizes the core sequence 5'-CAC[GA]TG-3'. Activates the transcription of growth-related genes. The sequence is that of Transcriptional regulator Myc-2 (mycb) from Cyprinus carpio (Common carp).